Consider the following 521-residue polypeptide: Glucosidase 2 subunit beta (521 aa).

An N-terminal signal peptide occupies residues 1 to 14 (MLLLLLLLLPLCWA). Phosphoserine is present on Ser24. 2 LDL-receptor class A domains span residues 37-71 (FTCLDGTATIPFDQVNDDYCDCKDGSDEPGTAACP) and 69-113 (ACPN…TVCE). 2 disulfides stabilise this stretch: Cys39-Cys58 and Cys56-Cys70. Asp49 contacts substrate. Residues Gln50, Asp53, Tyr55, Asp57, Asp63, and Glu64 each contribute to the Ca(2+) site. Position 53 (Asp53) interacts with substrate. N-linked (GlcNAc...) asparagine glycosylation occurs at Asn72. 3 cysteine pairs are disulfide-bonded: Cys77–Cys99, Cys97–Cys112, and Cys100–Cys116. Position 89 is a phosphoserine; by PKC (Ser89). Ca(2+) is bound by residues Arg91, Asp94, Val96, Asp98, Asp104, and Glu105. N6-succinyllysine is present on Lys166. Ser168 is modified (phosphoserine). 2 EF-hand domains span residues 209 to 244 (REQERAASAFQELDDNMDGMVSLAELQTHPELDTDG) and 245 to 290 (DGAL…TDIP). Asp222, Asn224, Asp226, Met228, and Glu233 together coordinate Ca(2+). Disordered regions lie at residues 226–267 (DGMV…DTTS) and 280–350 (YRSE…EKMP). 2 stretches are compositionally biased toward acidic residues: residues 241–253 (DTDGDGALSEEEA) and 308–331 (TEEEEEEEEEPEEEEEEEEEEEEA). The span at 332 to 343 (PPPLQPPQPPSP) shows a compositional bias: pro residues. Phosphoserine; by PKC is present on residues Ser376 and Ser383. The MRH domain occupies 406-507 (SQCYELTTNE…ELMTPAACPE (102 aa)). Cys408 and Cys421 form a disulfide bridge. The residue at position 427 (Ser427) is a Phosphoserine; by PKC. 2 disulfide bridges follow: Cys464-Cys493 and Cys478-Cys505. Residue Asn469 is glycosylated (N-linked (GlcNAc...) asparagine). The Prevents secretion from ER signature appears at 518–521 (HDEL).

As to quaternary structure, heterodimer of a catalytic alpha subunit (GANAB) and a beta subunit (PRKCSH). Binds glycosylated PTPRC. Expressed in kidney (at protein level).

It is found in the endoplasmic reticulum. It functions in the pathway glycan metabolism; N-glycan metabolism. Its function is as follows. Regulatory subunit of glucosidase II that cleaves sequentially the 2 innermost alpha-1,3-linked glucose residues from the Glc(2)Man(9)GlcNAc(2) oligosaccharide precursor of immature glycoproteins. Required for efficient PKD1/Polycystin-1 biogenesis and trafficking to the plasma membrane of the primary cilia. In Mus musculus (Mouse), this protein is Glucosidase 2 subunit beta.